The sequence spans 281 residues: Diaminopimelate epimerase (281 aa).

Residues N13, Q51, and N70 each coordinate substrate. The active-site Proton donor is the C79. Substrate is bound by residues 80–81 (GN), N163, N196, and 214–215 (ER). Residue C223 is the Proton acceptor of the active site. Substrate is bound at residue 224 to 225 (GS).

Belongs to the diaminopimelate epimerase family. Homodimer.

The protein resides in the cytoplasm. It catalyses the reaction (2S,6S)-2,6-diaminopimelate = meso-2,6-diaminopimelate. The protein operates within amino-acid biosynthesis; L-lysine biosynthesis via DAP pathway; DL-2,6-diaminopimelate from LL-2,6-diaminopimelate: step 1/1. In terms of biological role, catalyzes the stereoinversion of LL-2,6-diaminopimelate (L,L-DAP) to meso-diaminopimelate (meso-DAP), a precursor of L-lysine and an essential component of the bacterial peptidoglycan. The polypeptide is Diaminopimelate epimerase (Alcanivorax borkumensis (strain ATCC 700651 / DSM 11573 / NCIMB 13689 / SK2)).